The following is a 20-amino-acid chain: Pregnancy-associated glycoprotein 60H (20 aa).

An N-linked (GlcNAc...) asparagine glycan is attached at Asn4.

Belongs to the peptidase A1 family. As to expression, chorionic epithelium (trophectoderm) and placental cotyledons.

The protein localises to the secreted. Its subcellular location is the extracellular space. The chain is Pregnancy-associated glycoprotein 60H from Bison bonasus (European bison).